The sequence spans 546 residues: Chaperonin GroEL (546 aa).

Residues 29-32 (TLGP), lysine 50, 86-90 (DGTTT), glycine 414, 477-479 (NAL), and aspartate 493 each bind ATP.

Belongs to the chaperonin (HSP60) family. In terms of assembly, forms a cylinder of 14 subunits composed of two heptameric rings stacked back-to-back. Interacts with the co-chaperonin GroES.

Its subcellular location is the cytoplasm. The enzyme catalyses ATP + H2O + a folded polypeptide = ADP + phosphate + an unfolded polypeptide.. Functionally, together with its co-chaperonin GroES, plays an essential role in assisting protein folding. The GroEL-GroES system forms a nano-cage that allows encapsulation of the non-native substrate proteins and provides a physical environment optimized to promote and accelerate protein folding. The sequence is that of Chaperonin GroEL from Leptospira interrogans serogroup Icterohaemorrhagiae serovar copenhageni (strain Fiocruz L1-130).